A 291-amino-acid polypeptide reads, in one-letter code: NAD kinase (291 aa).

Aspartate 55 acts as the Proton acceptor in catalysis. NAD(+)-binding positions include 55–56, arginine 60, 130–131, aspartate 160, and 171–176; these read DG, NE, and TAYAFS.

Belongs to the NAD kinase family. The cofactor is a divalent metal cation.

Its subcellular location is the cytoplasm. It catalyses the reaction NAD(+) + ATP = ADP + NADP(+) + H(+). In terms of biological role, involved in the regulation of the intracellular balance of NAD and NADP, and is a key enzyme in the biosynthesis of NADP. Catalyzes specifically the phosphorylation on 2'-hydroxyl of the adenosine moiety of NAD to yield NADP. The sequence is that of NAD kinase from Corynebacterium glutamicum (strain ATCC 13032 / DSM 20300 / JCM 1318 / BCRC 11384 / CCUG 27702 / LMG 3730 / NBRC 12168 / NCIMB 10025 / NRRL B-2784 / 534).